The primary structure comprises 240 residues: MTESQDTPITTDGEARPHRRIKSFVMRAGRMTEGQQRGLDQGGPLYILPLAESPVDYDQVFGRSAPRTLEIGFGMGHSLLEMAAAAPEQDFIGVEVHRPGVGALLNGVLTEGLKNLRVYDCDAIEVLNRCVADNSLDRLMLFFPDPWHKARHHKRRIVQLEFAELVRRKLKPGGIFHMATDWEPYAEYMLEVMSAAPGYRNLAADGAYVPRPEERPITKFERRGERLGHGVWDLKFEKVG.

Over residues M1–T10 the composition is skewed to polar residues. The tract at residues M1–R20 is disordered. Residues E70, E95, D122, and D145 each contribute to the S-adenosyl-L-methionine site. D145 is an active-site residue. Substrate contacts are provided by residues K149, D181, and T218–E221.

The protein belongs to the class I-like SAM-binding methyltransferase superfamily. TrmB family.

It carries out the reaction guanosine(46) in tRNA + S-adenosyl-L-methionine = N(7)-methylguanosine(46) in tRNA + S-adenosyl-L-homocysteine. The protein operates within tRNA modification; N(7)-methylguanine-tRNA biosynthesis. In terms of biological role, catalyzes the formation of N(7)-methylguanine at position 46 (m7G46) in tRNA. The chain is tRNA (guanine-N(7)-)-methyltransferase from Pseudomonas putida (strain W619).